Reading from the N-terminus, the 243-residue chain is Outer membrane protein A (243 aa).

5 beta stranded membrane-spanning segments follow: residues 1-8 (LTAKLGYP), 13-21 (LDIYTRLGG), 48-57 (PVFAGGVEWA), 62-69 (IATRLEYQ), and 88-96 (LLSLGVSYR). 4 repeat units span residues 107–108 (AP), 109–110 (AP), 111–112 (AP), and 113–114 (AP). The 4 X 2 AA tandem repeats of A-P stretch occupies residues 107-114 (APAPAPAP). The OmpA-like domain occupies 116–243 (VQTKHFTLKS…RRVEIEVKGI (128 aa)). Cys217 and Cys229 are oxidised to a cystine.

Belongs to the outer membrane OOP (TC 1.B.6) superfamily. OmpA family. Monomer and homodimer.

Its subcellular location is the cell outer membrane. Its function is as follows. With TolR probably plays a role in maintaining the position of the peptidoglycan cell wall in the periplasm. Acts as a porin with low permeability that allows slow penetration of small solutes; an internal gate slows down solute passage. Functionally, required for conjugation with F-type plasmids; probably serves as the mating receptor on recipient cells. This chain is Outer membrane protein A, found in Escherichia fergusonii.